The chain runs to 408 residues: LL-diaminopimelate aminotransferase (408 aa).

Residues Tyr-15 and Gly-42 each contribute to the substrate site. Pyridoxal 5'-phosphate contacts are provided by residues Tyr-72, 108 to 109, Tyr-132, Asn-187, Tyr-218, and 246 to 248; these read SK and SFS. Substrate-binding residues include Lys-109, Tyr-132, and Asn-187. Position 249 is an N6-(pyridoxal phosphate)lysine (Lys-249). Residues Arg-257 and Asn-292 each coordinate pyridoxal 5'-phosphate. Positions 292 and 388 each coordinate substrate.

It belongs to the class-I pyridoxal-phosphate-dependent aminotransferase family. LL-diaminopimelate aminotransferase subfamily. In terms of assembly, homodimer. It depends on pyridoxal 5'-phosphate as a cofactor.

The catalysed reaction is (2S,6S)-2,6-diaminopimelate + 2-oxoglutarate = (S)-2,3,4,5-tetrahydrodipicolinate + L-glutamate + H2O + H(+). It functions in the pathway amino-acid biosynthesis; L-lysine biosynthesis via DAP pathway; LL-2,6-diaminopimelate from (S)-tetrahydrodipicolinate (aminotransferase route): step 1/1. Its function is as follows. Involved in the synthesis of meso-diaminopimelate (m-DAP or DL-DAP), required for both lysine and peptidoglycan biosynthesis. Catalyzes the direct conversion of tetrahydrodipicolinate to LL-diaminopimelate. The chain is LL-diaminopimelate aminotransferase from Prochlorococcus marinus (strain MIT 9303).